Reading from the N-terminus, the 1009-residue chain is Anillin-like protein 2 (1009 aa).

Disordered stretches follow at residues 1-29, 272-295, and 539-558; these read MYRRENINFSHPPQLKSPPPMSSPLDSNR, FGQEESVRASPMSRRNRRGTQTIV, and GTGYSASSSGPQFTRSPTLV. The segment covering 542-557 has biased composition (polar residues); the sequence is YSASSSGPQFTRSPTL. Residues 626–657 are a coiled coil; the sequence is SAADKINDSKRQISKLIETIEKTRKHIQLAEI. A PH domain is found at 892-1005; that stretch reads DVEYRGFLYL…WLNAINDTLF (114 aa).

Localizes to the surface of the rachis.

In terms of biological role, required to maintain the structure of the rachis, the central cytoplasmic core of the syncytial adult gonad. Failure to maintain the rachis leads to premature dissociation of oocytes and thereby impedes oogenesis. In Caenorhabditis elegans, this protein is Anillin-like protein 2 (ani-2).